The sequence spans 152 residues: Transcriptional regulator MraZ (152 aa).

2 SpoVT-AbrB domains span residues 5–52 (ATLV…PLPE) and 81–124 (ASEC…DETT).

The protein belongs to the MraZ family. In terms of assembly, forms oligomers.

Its subcellular location is the cytoplasm. The protein resides in the nucleoid. Functionally, negatively regulates its own expression and that of the subsequent genes in the proximal part of the division and cell wall (dcw) gene cluster. Acts by binding directly to DNA. May also regulate the expression of genes outside the dcw cluster. This chain is Transcriptional regulator MraZ, found in Klebsiella pneumoniae (strain 342).